We begin with the raw amino-acid sequence, 106 residues long: MALDPAEQHLRHVEKDVLIPKIIREKARERCSEQVEDFTRCCKDSGILMVLKCRKENSALKDCLTAYYNDPAFYEECKLEYLKEREEFRKTGVPTKKRLQKLPTNM.

Residue alanine 2 is modified to N-acetylalanine. Positions 28-71 (RERCSEQVEDFTRCCKDSGILMVLKCRKENSALKDCLTAYYNDP) constitute a CHCH domain. 2 short sequence motifs (cx9C motif) span residues 31-41 (CSEQVEDFTRC) and 53-63 (CRKENSALKDC). Disulfide bonds link cysteine 31–cysteine 63 and cysteine 41–cysteine 53.

It belongs to the CMC family. As to quaternary structure, component of the MITRAC (mitochondrial translation regulation assembly intermediate of cytochrome c oxidase complex) complex, the core components of this complex being COA3/MITRAC12 and COX14.

The protein localises to the mitochondrion. Its function is as follows. Component of the MITRAC (mitochondrial translation regulation assembly intermediate of cytochrome c oxidase complex) complex, that regulates cytochrome c oxidase assembly. This Mus musculus (Mouse) protein is COX assembly mitochondrial protein homolog (Cmc1).